The chain runs to 1315 residues: ESX secretion system protein EccC (1315 aa).

Basic residues predominate over residues 1–11 (MSTVLVRRKER). Residues 1–21 (MSTVLVRRKERRQPPQMPRGE) form a disordered region. Residues 1 to 40 (MSTVLVRRKERRQPPQMPRGEILLESPPELPEVVTNSFQN) lie on the Cytoplasmic side of the membrane. Residues 41 to 61 (VLMYLPMAAGSAAMVFTFLNH) traverse the membrane as a helical segment. Residues 62-64 (RNT) lie on the Extracellular side of the membrane. The chain crosses the membrane as a helical span at residues 65-85 (LQLVAGGMFALSMFGMMFGQL). The Cytoplasmic portion of the chain corresponds to 86-1315 (SQQSGERKTK…RLIQTAYRES (1230 aa)). 2 FtsK domains span residues 456–656 (GRPL…MESR) and 813–1004 (RDPY…YESE). 479–486 (GATGSGKS) contributes to the ATP binding site. Glu-593 is an active-site residue. The interval 721-1315 (RPQVVEQPQP…RLIQTAYRES (595 aa)) is binds EsxB. Residues 834 to 839 (QTGKST), Thr-1031, 1119 to 1124 (ECGKSN), Gln-1293, and 1310 to 1311 (TA) each bind ATP. The FtsK 3 domain occupies 1099–1282 (LSPVYLDFNT…MSGNKDEGIL (184 aa)).

As to quaternary structure, the cytosolic domain can form homodimers. Binds EsxB, which leads to multimerization, however EsxA disassembles the multimers, possibly by making EccC-EsxA-EsxB trimers instead of EccC-EsxB-EsxB-EccC tetramers. Forms a complex with EsxA and EsxB, probably wholly mediated by EsxB.

The protein localises to the cell membrane. EsxB binding to the third FtsK domain causes multimerization; a subsequent unknown step relieves the allosteric inhibition of linker 2 on FtsK domain 1, activating the ATPase activity; a mutant EsxB ('Ala-98') does not cause multimers to form. Part of the ESX specialized secretion system, which exports proteins from the cell including EsxA (ESAT-6) and EsxB (CFP-10). Has weak intrinsic ATPase activity; probably only the first FtsK domain can hydrolyze ATP. Might be the translocase subunit. The protein is ESX secretion system protein EccC of Thermomonospora curvata (strain ATCC 19995 / DSM 43183 / JCM 3096 / KCTC 9072 / NBRC 15933 / NCIMB 10081 / Henssen B9).